A 531-amino-acid chain; its full sequence is Putative cysteine ligase BshC (531 aa).

Positions 447–481 form a coiled coil; that stretch reads KAQEKKQTKGLDNLEKRLLKAEKKMHSEKLKKIIE.

The protein belongs to the BshC family.

The sequence is that of Putative cysteine ligase BshC from Flavobacterium psychrophilum (strain ATCC 49511 / DSM 21280 / CIP 103535 / JIP02/86).